We begin with the raw amino-acid sequence, 380 residues long: Chaperone protein DnaJ (380 aa).

The J domain occupies 5–70 (DYYEVLGVAK…QKRAAYDQYG (66 aa)). A CR-type zinc finger spans residues 140–218 (GYDTQIRVPS…CHGAGKVKET (79 aa)). Zn(2+) is bound by residues cysteine 153, cysteine 156, cysteine 170, cysteine 173, cysteine 192, cysteine 195, cysteine 206, and cysteine 209. CXXCXGXG motif repeat units follow at residues 153–160 (CEVCHGSG), 170–177 (CPTCSGSG), 192–199 (CPKCHGTG), and 206–213 (CGHCHGAG).

The protein belongs to the DnaJ family. In terms of assembly, homodimer. Zn(2+) serves as cofactor.

The protein localises to the cytoplasm. Its function is as follows. Participates actively in the response to hyperosmotic and heat shock by preventing the aggregation of stress-denatured proteins and by disaggregating proteins, also in an autonomous, DnaK-independent fashion. Unfolded proteins bind initially to DnaJ; upon interaction with the DnaJ-bound protein, DnaK hydrolyzes its bound ATP, resulting in the formation of a stable complex. GrpE releases ADP from DnaK; ATP binding to DnaK triggers the release of the substrate protein, thus completing the reaction cycle. Several rounds of ATP-dependent interactions between DnaJ, DnaK and GrpE are required for fully efficient folding. Also involved, together with DnaK and GrpE, in the DNA replication of plasmids through activation of initiation proteins. The sequence is that of Chaperone protein DnaJ from Paraburkholderia xenovorans (strain LB400).